The following is a 94-amino-acid chain: Acylphosphatase (94 aa).

Residues 8–94 enclose the Acylphosphatase-like domain; sequence RLTAWVHGRV…REQITGFHER (87 aa). Catalysis depends on residues Arg-23 and Asn-41.

Belongs to the acylphosphatase family.

It catalyses the reaction an acyl phosphate + H2O = a carboxylate + phosphate + H(+). This chain is Acylphosphatase (acyP), found in Mycobacterium sp. (strain JLS).